Reading from the N-terminus, the 368-residue chain is Methylthioribose-1-phosphate isomerase (368 aa).

Substrate is bound by residues 54-56 (RGA), arginine 91, and glutamine 204. Catalysis depends on aspartate 245, which acts as the Proton donor. Substrate is bound at residue 255–256 (NK).

It belongs to the eIF-2B alpha/beta/delta subunits family. MtnA subfamily.

The enzyme catalyses 5-(methylsulfanyl)-alpha-D-ribose 1-phosphate = 5-(methylsulfanyl)-D-ribulose 1-phosphate. The protein operates within amino-acid biosynthesis; L-methionine biosynthesis via salvage pathway; L-methionine from S-methyl-5-thio-alpha-D-ribose 1-phosphate: step 1/6. In terms of biological role, catalyzes the interconversion of methylthioribose-1-phosphate (MTR-1-P) into methylthioribulose-1-phosphate (MTRu-1-P). This chain is Methylthioribose-1-phosphate isomerase, found in Gluconobacter oxydans (strain 621H) (Gluconobacter suboxydans).